Consider the following 685-residue polypeptide: Sodium/glucose cotransporter 4 (685 aa).

The tract at residues M1–E20 is disordered. At M1–Y32 the chain is on the extracellular side. A helical membrane pass occupies residues D33–I53. The Cytoplasmic portion of the chain corresponds to R54 to T71. A helical membrane pass occupies residues W72–G94. Residues T95–A110 are Extracellular-facing. The chain crosses the membrane as a helical span at residues T111–V131. Residues T132–L153 are Cytoplasmic-facing. The helical transmembrane segment at S154 to I174 threads the bilayer. The Extracellular segment spans residues Q175–T186. A helical transmembrane segment spans residues V187–Y207. At T208–T213 the chain is on the cytoplasmic side. Residues V214 to Y234 traverse the membrane as a helical segment. At P235–N271 the chain is on the extracellular side. N247 carries an N-linked (GlcNAc...) asparagine glycan. The chain crosses the membrane as a helical span at residues G272–C292. Residues T293–G313 are Cytoplasmic-facing. A helical membrane pass occupies residues S314 to I334. Residues S335–R379 lie on the Extracellular side of the membrane. A helical membrane pass occupies residues G380–S402. The Cytoplasmic portion of the chain corresponds to T403–M423. A helical membrane pass occupies residues V424–I444. The Extracellular portion of the chain corresponds to Q445 to Y455. Residues I456–F476 form a helical membrane-spanning segment. Residues C477 to P483 lie on the Cytoplasmic side of the membrane. The helical transmembrane segment at G484–F504 threads the bilayer. Residues S505–Y526 are Extracellular-facing. Residues L527–F547 traverse the membrane as a helical segment. The Cytoplasmic portion of the chain corresponds to T548–R664. The tract at residues V577–G616 is disordered. Residues V665–A685 traverse the membrane as a helical segment.

Belongs to the sodium:solute symporter (SSF) (TC 2.A.21) family.

It is found in the cell membrane. It catalyses the reaction D-mannose(out) + n Na(+)(out) = D-mannose(in) + n Na(+)(in). Functionally, electrogenic Na(+)-coupled sugar symporter that may play a primary role in D-mannose and possibly D-fructose and D-glucose transport at the plasma membrane. Transporter activity is driven by a transmembrane Na(+) electrochemical gradient set by the Na(+)/K(+) pump. Exclusively recognizes sugar substrates having a pyranose ring with an axial hydroxyl group on carbon 2. The protein is Sodium/glucose cotransporter 4 (Slc5a9) of Mus musculus (Mouse).